The following is a 279-amino-acid chain: Beta-lactamase (279 aa).

A signal peptide spans 1 to 21; it reads MRYVRLCVISLLATLPLVVYA. Ser66 (acyl-ester intermediate) is an active-site residue. Cys73 and Cys119 form a disulfide bridge. 230 to 232 serves as a coordination point for substrate; that stretch reads KTG.

Belongs to the class-A beta-lactamase family.

The catalysed reaction is a beta-lactam + H2O = a substituted beta-amino acid. The protein is Beta-lactamase of Klebsiella pneumoniae.